The chain runs to 77 residues: Small ribosomal subunit protein bS21 (77 aa).

Positions 55–77 (RKLARKRAQREGLMSNGRISALR) are disordered.

The protein belongs to the bacterial ribosomal protein bS21 family.

The chain is Small ribosomal subunit protein bS21 from Bartonella quintana (strain Toulouse) (Rochalimaea quintana).